A 69-amino-acid chain; its full sequence is FMRFamide-like neuropeptides 24 (69 aa).

The N-terminal stretch at 1–25 is a signal peptide; the sequence is MLSSRTSSIILILAILVAIMAVAQC. Residues 26–51 constitute a propeptide that is removed on maturation; sequence RNIQYDVEEMTPEAAFRYAQWGEIPH. Phenylalanine amide is present on F64. Residues 68–69 constitute a propeptide that is removed on maturation; sequence SI.

It belongs to the FARP (FMRFamide related peptide) family.

The protein localises to the secreted. Probable FMRFamide-like neuropeptides. Plays a role in behaviors associated with a sleep-like state induced by stress (SIS), acting in concert with the FMRFamide related peptide flp-13 and neuropeptide-like protein nlp-8. The chain is FMRFamide-like neuropeptides 24 from Caenorhabditis elegans.